Here is a 340-residue protein sequence, read N- to C-terminus: Probable protein phosphatase 2C 21 (340 aa).

The interval 1–21 is disordered; it reads MGASPSRPLEQSPSSSEGENH. One can recognise a PPM-type phosphatase domain in the interval 24–305; it reads KYASYTTQGF…DNATAILVKF (282 aa). Mn(2+) is bound by residues D58, G59, D254, and D296. Residues 311–340 form a disordered region; the sequence is DPDEVASARDEHQHNPEGGDEKLDINNDND. Positions 316 to 340 are enriched in basic and acidic residues; it reads ASARDEHQHNPEGGDEKLDINNDND.

The protein belongs to the PP2C family. The cofactor is Mg(2+). Requires Mn(2+) as cofactor.

The enzyme catalyses O-phospho-L-seryl-[protein] + H2O = L-seryl-[protein] + phosphate. It carries out the reaction O-phospho-L-threonyl-[protein] + H2O = L-threonyl-[protein] + phosphate. This chain is Probable protein phosphatase 2C 21, found in Oryza sativa subsp. japonica (Rice).